Reading from the N-terminus, the 502-residue chain is Mannitol 2-dehydrogenase (502 aa).

37-48 is a binding site for NAD(+); sequence IVHVGVGGFHRA.

It belongs to the mannitol dehydrogenase family. In terms of assembly, monomer.

The enzyme catalyses D-mannitol + NAD(+) = D-fructose + NADH + H(+). In terms of biological role, catalyzes the NAD(H)-dependent interconversion of D-fructose and D-mannitol in the mannitol metabolic pathway. The chain is Mannitol 2-dehydrogenase from Aspergillus oryzae (strain ATCC 42149 / RIB 40) (Yellow koji mold).